A 562-amino-acid chain; its full sequence is Malate synthase (562 aa).

Residue Arg-177 is the Proton acceptor of the active site. Catalysis depends on Asp-463, which acts as the Proton donor. The short motif at 560 to 562 (SRL) is the Microbody targeting signal element.

Belongs to the malate synthase family.

It localises to the glyoxysome. The catalysed reaction is glyoxylate + acetyl-CoA + H2O = (S)-malate + CoA + H(+). The protein operates within carbohydrate metabolism; glyoxylate cycle; (S)-malate from isocitrate: step 2/2. Functionally, does not seem to be essential for lipid utilization and gluconeogenesis in seedlings. This is Malate synthase from Arabidopsis thaliana (Mouse-ear cress).